The following is a 235-amino-acid chain: Glycerol-3-phosphate acyltransferase (235 aa).

Helical transmembrane passes span 4-24 (LLAI…IMAG), 56-76 (TVTL…VAFF), 94-114 (LLAG…GFKG), 126-146 (IGIA…TVWF), 152-172 (VASI…KYVF), and 194-214 (SLDY…LFTH).

The protein belongs to the PlsY family. Probably interacts with PlsX.

It is found in the cell inner membrane. It carries out the reaction an acyl phosphate + sn-glycerol 3-phosphate = a 1-acyl-sn-glycero-3-phosphate + phosphate. Its pathway is lipid metabolism; phospholipid metabolism. Its function is as follows. Catalyzes the transfer of an acyl group from acyl-phosphate (acyl-PO(4)) to glycerol-3-phosphate (G3P) to form lysophosphatidic acid (LPA). This enzyme utilizes acyl-phosphate as fatty acyl donor, but not acyl-CoA or acyl-ACP. The sequence is that of Glycerol-3-phosphate acyltransferase from Chlorobium phaeovibrioides (strain DSM 265 / 1930) (Prosthecochloris vibrioformis (strain DSM 265)).